The sequence spans 358 residues: Phospho-N-acetylmuramoyl-pentapeptide-transferase (358 aa).

The next 10 membrane-spanning stretches (helical) occupy residues 27-47 (IYAM…VIRV), 73-93 (TMGG…WADL), 97-117 (YIWT…VDDY), 134-154 (MFWQ…KPGF), 170-190 (LWFW…NAVN), 197-217 (GLAI…SYVA), 233-253 (GAGE…GFLW), 261-281 (VFMG…IAVI), 286-306 (ILLV…IFQV), and 335-355 (KIIV…ISTL).

Belongs to the glycosyltransferase 4 family. MraY subfamily. Mg(2+) is required as a cofactor.

It is found in the cell inner membrane. The enzyme catalyses UDP-N-acetyl-alpha-D-muramoyl-L-alanyl-gamma-D-glutamyl-meso-2,6-diaminopimeloyl-D-alanyl-D-alanine + di-trans,octa-cis-undecaprenyl phosphate = di-trans,octa-cis-undecaprenyl diphospho-N-acetyl-alpha-D-muramoyl-L-alanyl-D-glutamyl-meso-2,6-diaminopimeloyl-D-alanyl-D-alanine + UMP. Its pathway is cell wall biogenesis; peptidoglycan biosynthesis. Its function is as follows. Catalyzes the initial step of the lipid cycle reactions in the biosynthesis of the cell wall peptidoglycan: transfers peptidoglycan precursor phospho-MurNAc-pentapeptide from UDP-MurNAc-pentapeptide onto the lipid carrier undecaprenyl phosphate, yielding undecaprenyl-pyrophosphoryl-MurNAc-pentapeptide, known as lipid I. In Pelobacter propionicus (strain DSM 2379 / NBRC 103807 / OttBd1), this protein is Phospho-N-acetylmuramoyl-pentapeptide-transferase.